The following is a 210-amino-acid chain: Somatotropin (210 aa).

The first 22 residues, 1–22 (MGQVFLLMPVLLVSCFLSQGAA), serve as a signal peptide directing secretion. Residue histidine 38 coordinates Zn(2+). A disulfide bridge connects residues cysteine 71 and cysteine 183. A Zn(2+)-binding site is contributed by glutamate 192. Cysteine 200 and cysteine 208 are oxidised to a cystine.

The protein belongs to the somatotropin/prolactin family.

It is found in the secreted. In terms of biological role, growth hormone plays an important role in growth control and is involved in the regulation of several anabolic processes. Implicated as an osmoregulatory substance important for seawater adaptation. This is Somatotropin (gh) from Oncorhynchus kisutch (Coho salmon).